A 208-amino-acid chain; its full sequence is LexA repressor (208 aa).

The segment at residues 30–50 (VREIGKSVGLSSSSTVAAYLE) is a DNA-binding region (H-T-H motif). Active-site for autocatalytic cleavage activity residues include S129 and K167.

It belongs to the peptidase S24 family. Homodimer.

It carries out the reaction Hydrolysis of Ala-|-Gly bond in repressor LexA.. Functionally, represses a number of genes involved in the response to DNA damage (SOS response), including recA and lexA. In the presence of single-stranded DNA, RecA interacts with LexA causing an autocatalytic cleavage which disrupts the DNA-binding part of LexA, leading to derepression of the SOS regulon and eventually DNA repair. The chain is LexA repressor from Lacticaseibacillus casei (strain BL23) (Lactobacillus casei).